Consider the following 334-residue polypeptide: 2,3-bisphosphoglycerate-dependent phosphoglycerate mutase 1 (334 aa).

Residues 1-48 constitute a chloroplast transit peptide; sequence MATATSHQSVVSFASLRSSPSSTISQCGFKIDSSLSFTSKKTNFCKIK. Substrate is bound by residues 84-91, 97-98, arginine 134, 188-191, lysine 199, 215-216, and 259-260; these read RHGESLWN, TG, ERMY, RR, and GN. Histidine 85 acts as the Tele-phosphohistidine intermediate in catalysis. The active-site Proton donor/acceptor is glutamate 188.

The protein belongs to the phosphoglycerate mutase family. BPG-dependent PGAM subfamily.

It localises to the plastid. It is found in the chloroplast. The catalysed reaction is (2R)-2-phosphoglycerate = (2R)-3-phosphoglycerate. It functions in the pathway carbohydrate degradation; glycolysis; pyruvate from D-glyceraldehyde 3-phosphate: step 3/5. Functionally, catalyzes the interconversion of 2-phosphoglycerate and 3-phosphoglycerate. The protein is 2,3-bisphosphoglycerate-dependent phosphoglycerate mutase 1 of Arabidopsis thaliana (Mouse-ear cress).